A 423-amino-acid chain; its full sequence is COP9 signalosome complex subunit 3 (423 aa).

At alanine 2 the chain carries N-acetylalanine. The 169-residue stretch at 197 to 365 (NFERALYFYE…GMVSFHDNPE (169 aa)) folds into the PCI domain. A disordered region spans residues 402–423 (QFVQKSMGSQEDDSGNKPSSYS). Phosphoserine occurs at positions 407, 410, and 423.

This sequence belongs to the CSN3 family. As to quaternary structure, component of the CSN complex, composed of COPS1/GPS1, COPS2, COPS3, COPS4, COPS5, COPS6, COPS7 (COPS7A or COPS7B), COPS8 and COPS9. In the complex, it probably interacts directly with COPS1, COPS4, COPS8 and COPS9. Interacts with CK2 and PKD. Interacts with the translation initiation factor EIF3S6 and IKBKG. Interacts with ERCC6.

Its subcellular location is the cytoplasm. It localises to the nucleus. Its function is as follows. Component of the COP9 signalosome complex (CSN), a complex involved in various cellular and developmental processes. The CSN complex is an essential regulator of the ubiquitin (Ubl) conjugation pathway by mediating the deneddylation of the cullin subunits of SCF-type E3 ligase complexes, leading to decrease the Ubl ligase activity of SCF-type complexes such as SCF, CSA or DDB2. The complex is also involved in phosphorylation of p53/TP53, c-jun/JUN, IkappaBalpha/NFKBIA, ITPK1 and IRF8/ICSBP, possibly via its association with CK2 and PKD kinases. CSN-dependent phosphorylation of TP53 and JUN promotes and protects degradation by the Ubl system, respectively. Essential to maintain the survival of epiblast cells and thus the development of the postimplantation embryo. This Rattus norvegicus (Rat) protein is COP9 signalosome complex subunit 3 (Cops3).